An 84-amino-acid chain; its full sequence is Cytochrome b559 subunit alpha (84 aa).

The Cytoplasmic segment spans residues 2-20 (AGTTGERPFSDIITSVRYW). The helical transmembrane segment at 21–35 (VIHSITIPALFIAGW) threads the bilayer. Residue His23 coordinates heme. The Lumenal portion of the chain corresponds to 36–84 (LFVSTGLAYDVFGTPRPDSYYAQEQRSIPLVTDRFEAKQQVETFLEQLK).

This sequence belongs to the PsbE/PsbF family. In terms of assembly, heterodimer of an alpha subunit and a beta subunit. PSII is composed of 1 copy each of membrane proteins PsbA, PsbB, PsbC, PsbD, PsbE, PsbF, PsbH, PsbI, PsbJ, PsbK, PsbL, PsbM, PsbT, PsbX, PsbY, PsbZ, Psb30/Ycf12, peripheral proteins PsbO, CyanoQ (PsbQ), PsbU, PsbV and a large number of cofactors. It forms dimeric complexes. It depends on heme b as a cofactor.

Its subcellular location is the cellular thylakoid membrane. This b-type cytochrome is tightly associated with the reaction center of photosystem II (PSII). PSII is a light-driven water:plastoquinone oxidoreductase that uses light energy to abstract electrons from H(2)O, generating O(2) and a proton gradient subsequently used for ATP formation. It consists of a core antenna complex that captures photons, and an electron transfer chain that converts photonic excitation into a charge separation. In Thermostichus vulcanus (Synechococcus vulcanus), this protein is Cytochrome b559 subunit alpha.